We begin with the raw amino-acid sequence, 269 residues long: Aquaporin-1 (269 aa).

Topologically, residues 1 to 11 (MASEFKKKLFW) are cytoplasmic. Residues 12 to 29 (RAVVAEFLAMTLFVFISI) form a helical membrane-spanning segment. The Extracellular portion of the chain corresponds to 30–46 (GSALGFKYPVGNNQTAV). Residue N42 is glycosylated (N-linked (GlcNAc...) asparagine). Residues 47–65 (QDNVKVSLAFGLSIATLAQ) form a helical membrane-spanning segment. The Cytoplasmic portion of the chain corresponds to 66-68 (SVG). Residues 69-82 (HISGAHLNPAVTLG) lie within the membrane without spanning it. Positions 76–78 (NPA) match the NPA 1 motif. The Cytoplasmic portion of the chain corresponds to 83–90 (LLLSCQIS). A helical membrane pass occupies residues 91 to 109 (IFRALMYIIAQCVGAIVAT). Topologically, residues 110–133 (AILSGITSSLPGNSLGRNDLADGV) are extracellular. A helical membrane pass occupies residues 134-153 (NSGQGLGIEIIGTLQLVLCV). At 154 to 163 (LATTDRRRRD) the chain is on the cytoplasmic side. Residues 164–181 (LGGSAPLAIGLSVALGHL) traverse the membrane as a helical segment. The Extracellular portion of the chain corresponds to 182–186 (LAIDY). The stretch at 187 to 199 (TGCGINPARSFGS) is an intramembrane region. Residues 192-194 (NPA) carry the NPA 2 motif. Over 200 to 206 (AVITHNF) the chain is Extracellular. N-linked (GlcNAc...) asparagine glycosylation occurs at N205. A helical membrane pass occupies residues 207–224 (SNHWIFWVGPFIGGALAV). The Cytoplasmic portion of the chain corresponds to 225–269 (LIYDFILAPRSSDFTDRVKVWTSGQVEEYDLDADDINSRVEMKPK). Position 247 is a phosphoserine (S247). Y253 carries the post-translational modification Phosphotyrosine. S262 bears the Phosphoserine mark.

The protein belongs to the MIP/aquaporin (TC 1.A.8) family. Homotetramer; each monomer provides an independent water pore. Component of the ankyrin-1 complex in the erythrocyte, composed of ANK1, RHCE, RHAG, SLC4A1, EPB42, GYPA, GYPB and AQP1. Interacts with EPHB2; involved in endolymph production in the inner ear. Identified in a complex with STOM. Interacts (via the N-terminal) with ANK1 (via ANK 1-5 repeats). Interacts (via the C-terminal) with EPB42.

The protein resides in the cell membrane. It carries out the reaction H2O(in) = H2O(out). The enzyme catalyses nitric oxide(out) = nitric oxide(in). The catalysed reaction is CO2(out) = CO2(in). It catalyses the reaction glycerol(in) = glycerol(out). It carries out the reaction H2O2(out) = H2O2(in). The enzyme catalyses K(+)(in) = K(+)(out). The catalysed reaction is Na(+)(in) = Na(+)(out). Functionally, forms a water channel that facilitates the transport of water across cell membranes, playing a crucial role in water homeostasis in various tissues. Could also be permeable to small solutes including hydrogen peroxide, glycerol and gases such as amonnia (NH3), nitric oxide (NO) and carbon dioxide (CO2). Recruited to the ankyrin-1 complex, a multiprotein complex of the erythrocyte membrane, it could be part of a CO2 metabolon, linking facilitated diffusion of CO2 across the membrane, anion exchange of Cl(-)/HCO3(-) and interconversion of dissolved CO2 and carbonic acid in the cytosol. In vitro, it shows non-selective gated cation channel activity and may be permeable to cations like K(+) and Na(+) in vivo. The protein is Aquaporin-1 of Pongo abelii (Sumatran orangutan).